The chain runs to 565 residues: CTP synthase (565 aa).

Positions 1-272 are amidoligase domain; that stretch reads MARPKNVKHI…DLRVMKKLGL (272 aa). Ser-18 contacts CTP. Ser-18 lines the UTP pocket. ATP is bound at residue 19–24; it reads SLGKGI. Position 59 (Tyr-59) interacts with L-glutamine. Asp-76 contacts ATP. The Mg(2+) site is built by Asp-76 and Glu-146. CTP-binding positions include 153 to 155, 193 to 198, and Lys-229; these read DIE and KTKPTQ. Residues 193–198 and Lys-229 contribute to the UTP site; that span reads KTKPTQ. In terms of domain architecture, Glutamine amidotransferase type-1 spans 299-543; sequence TIGVCGKYTE…VAAAKEYEKG (245 aa). An L-glutamine-binding site is contributed by Gly-363. Residue Cys-390 is the Nucleophile; for glutamine hydrolysis of the active site. L-glutamine-binding positions include 391–394, Glu-414, and Arg-471; that span reads LGMQ. Residues His-516 and Glu-518 contribute to the active site.

It belongs to the CTP synthase family. In terms of assembly, homotetramer.

It catalyses the reaction UTP + L-glutamine + ATP + H2O = CTP + L-glutamate + ADP + phosphate + 2 H(+). The catalysed reaction is L-glutamine + H2O = L-glutamate + NH4(+). It carries out the reaction UTP + NH4(+) + ATP = CTP + ADP + phosphate + 2 H(+). The protein operates within pyrimidine metabolism; CTP biosynthesis via de novo pathway; CTP from UDP: step 2/2. Allosterically activated by GTP, when glutamine is the substrate; GTP has no effect on the reaction when ammonia is the substrate. The allosteric effector GTP functions by stabilizing the protein conformation that binds the tetrahedral intermediate(s) formed during glutamine hydrolysis. Inhibited by the product CTP, via allosteric rather than competitive inhibition. Its function is as follows. Catalyzes the ATP-dependent amination of UTP to CTP with either L-glutamine or ammonia as the source of nitrogen. Regulates intracellular CTP levels through interactions with the four ribonucleotide triphosphates. This Chlorobium phaeobacteroides (strain DSM 266 / SMG 266 / 2430) protein is CTP synthase.